A 783-amino-acid chain; its full sequence is MVIMSEFSADPAGQGQGQQKPLRVGFYDIERTLGKGNFAVVKLARHRVTKTQVAIKIIDKTRLDSSNLEKIYREVQLMKLLNHPHIIKLYQVMETKDMLYIVTEFAKNGEMFDYLTSNGHLSENEARKKFWQILSAVEYCHDHHIVHRDLKTENLLLDGNMDIKLADFGFGNFYKSGEPLSTWCGSPPYAAPEVFEGKEYEGPQLDIWSLGVVLYVLVCGSLPFDGPNLPTLRQRVLEGRFRIPFFMSQDCESLIRRMLVVDPARRITIAQIRQHRWMRAEPCLPGPACPAFSAHSYTSNLGDYDEQALGIMQTLGVDRQRTVESLQNSSYNHFAAIYYLLLERLKEYRNAQCARPGPARQPRPRSSDLSGLEVPQEGLSTDPFRPALLCPQPQTLVQSVLQAEMDCELQSSLQWPLFFPVDASCSGVFRPRPVSPSSLLDTAISEEARQGPGLEEEQDTQESLPSSTGRRHTLAEVSTRLSPLTAPCIVVSPSTTASPAEGTSSDSCLTFSASKSPAGLSGTPATQGLLGACSPVRLASPFLGSQSATPVLQAQGGLGGAVLLPVSFQEGRRASDTSLTQGLKAFRQQLRKTTRTKGFLGLNKIKGLARQVCQAPASRASRGGLSPFHAPAQSPGLHGGAAGSREGWSLLEEVLEQQRLLQLQHHPAAAPGCSQAPQPAPAPFVIAPCDGPGAAPLPSTLLTSGLPLLPPPLLQTGASPVASAAQLLDTHLHIGTGPTALPAVPPPRLARLAPGCEPLGLLQGDCEMEDLMPCSLGTFVLVQ.

Positions 27–278 (YDIERTLGKG…IAQIRQHRWM (252 aa)) constitute a Protein kinase domain. ATP-binding positions include 33–41 (LGKGNFAVV) and lysine 56. Aspartate 149 serves as the catalytic Proton acceptor. Threonine 182 carries the post-translational modification Phosphothreonine; by LKB1 and GSK3-beta. Serine 186 is subject to Phosphoserine; by autocatalysis. The 41-residue stretch at 303–343 (DYDEQALGIMQTLGVDRQRTVESLQNSSYNHFAAIYYLLLE) folds into the UBA domain. At threonine 322 the chain carries Phosphothreonine; by CaMK1. 2 disordered regions span residues 353–377 (CARP…VPQE) and 449–477 (RQGP…LAEV). The residue at position 473 (threonine 473) is a Phosphothreonine; by PKA. At serine 575 the chain carries Phosphoserine; by PKA. The tract at residues 583 to 612 (LKAFRQQLRKTTRTKGFLGLNKIKGLARQV) is RK-rich region; required for cAMP responsiveness and nuclear localization. Residues 619-643 (RASRGGLSPFHAPAQSPGLHGGAAG) are disordered.

This sequence belongs to the protein kinase superfamily. CAMK Ser/Thr protein kinase family. AMPK subfamily. Interacts with ATP1A1. Interacts (when phosphorylated on Thr-182 and Ser-186) with YWHAZ. Interacts (when phosphorylated at Thr-473 and/or Ser-575) with 14-3-3 proteins; the interaction inhibits kinase activity towards TORCs. There is a cooperative effect of the phosphorylation sites in 14-3-3 binding as the interaction is stronger when both Thr-473 and Ser-575 are modified. It depends on Mg(2+) as a cofactor. Phosphorylated at Thr-182 by STK11/LKB1 in complex with STE20-related adapter-alpha (STRADA) pseudo kinase and CAB39, leading to its activation. Phosphorylation at Thr-182 promotes autophosphorylation at Ser-186, which is required for sustained activity. Autophosphorylation at Ser-186 is maintained by sequential phosphorylation at Thr-182 by GSK3-beta. GSK3-beta cannot initiate phosphorylation at Thr-182, it can only maintain it. Phosphorylation at Ser-575 in response to cAMP signaling promotes translocation to the cytoplasm. Phosphorylation at Thr-322 by CaMK1 following intracellular sodium concentration leads to activation.

The protein localises to the cytoplasm. Its subcellular location is the nucleus. The catalysed reaction is L-seryl-[protein] + ATP = O-phospho-L-seryl-[protein] + ADP + H(+). It carries out the reaction L-threonyl-[protein] + ATP = O-phospho-L-threonyl-[protein] + ADP + H(+). Its activity is regulated as follows. Activated by phosphorylation on Thr-182. Also activated by phosphorylation on Thr-322 in response to increases in intracellular sodium in parallel with elevations in intracellular calcium through the reversible sodium/calcium exchanger. Inhibited by phosphorylation at Thr-473 and Ser-575, probably by PKA, which triggers interaction with 14-3-3 proteins. Functionally, serine/threonine-protein kinase involved in various processes such as cell cycle regulation, gluconeogenesis and lipogenesis regulation, muscle growth and differentiation and tumor suppression. Phosphorylates HDAC4, HDAC5, PPME1, SREBF1, CRTC1/TORC1. Inhibits CREB activity by phosphorylating and inhibiting activity of TORCs, the CREB-specific coactivators, like CRTC2/TORC2 and CRTC3/TORC3 in response to cAMP signaling. Acts as a tumor suppressor and plays a key role in p53/TP53-dependent anoikis, a type of apoptosis triggered by cell detachment: required for phosphorylation of p53/TP53 in response to loss of adhesion and is able to suppress metastasis. Part of a sodium-sensing signaling network, probably by mediating phosphorylation of PPME1: following increases in intracellular sodium, SIK1 is activated by CaMK1 and phosphorylates PPME1 subunit of protein phosphatase 2A (PP2A), leading to dephosphorylation of sodium/potassium-transporting ATPase ATP1A1 and subsequent increase activity of ATP1A1. Acts as a regulator of muscle cells by phosphorylating and inhibiting class II histone deacetylases HDAC4 and HDAC5, leading to promote expression of MEF2 target genes in myocytes. Also required during cardiomyogenesis by regulating the exit of cardiomyoblasts from the cell cycle via down-regulation of CDKN1C/p57Kip2. Acts as a regulator of hepatic gluconeogenesis by phosphorylating and repressing the CREB-specific coactivators CRTC1/TORC1 and CRTC2/TORC2, leading to inhibit CREB activity. Also regulates hepatic lipogenesis by phosphorylating and inhibiting SREBF1. In concert with CRTC1/TORC1, regulates the light-induced entrainment of the circadian clock by attenuating PER1 induction; represses CREB-mediated transcription of PER1 by phosphorylating and deactivating CRTC1/TORC1. The polypeptide is Serine/threonine-protein kinase SIK1 (SIK1) (Homo sapiens (Human)).